A 379-amino-acid polypeptide reads, in one-letter code: Cytochrome b (379 aa).

Transmembrane regions (helical) follow at residues 33–53 (FGSLLGMCLVIQILTGLFLAM), 77–98 (WLIRYLHANGASMFFICLFIHV), 113–133 (WNIGIILLLTTMATAFVGYVL), and 178–198 (FFAFHFILPFIIAAFALVHLL). The heme b site is built by H83 and H97. The heme b site is built by H182 and H196. Residue H201 participates in a ubiquinone binding. A run of 4 helical transmembrane segments spans residues 226 to 246 (IKDLLGIFLLLLVLMTLALFF), 288 to 308 (LGGVLALVLSILILAAFPLLN), 320 to 340 (VTQTIYWIFIANLLVLTWIGG), and 347 to 367 (FTTIGQIASITYFTIIIILIP).

It belongs to the cytochrome b family. As to quaternary structure, the cytochrome bc1 complex contains 11 subunits: 3 respiratory subunits (MT-CYB, CYC1 and UQCRFS1), 2 core proteins (UQCRC1 and UQCRC2) and 6 low-molecular weight proteins (UQCRH/QCR6, UQCRB/QCR7, UQCRQ/QCR8, UQCR10/QCR9, UQCR11/QCR10 and a cleavage product of UQCRFS1). This cytochrome bc1 complex then forms a dimer. Heme b is required as a cofactor.

Its subcellular location is the mitochondrion inner membrane. Component of the ubiquinol-cytochrome c reductase complex (complex III or cytochrome b-c1 complex) that is part of the mitochondrial respiratory chain. The b-c1 complex mediates electron transfer from ubiquinol to cytochrome c. Contributes to the generation of a proton gradient across the mitochondrial membrane that is then used for ATP synthesis. This Akodon lindberghi (Lindbergh's grass mouse) protein is Cytochrome b (MT-CYB).